The sequence spans 249 residues: MQTSLHENGPVFNIKNFSGPLDLLLSLVKDKNIDIFEINLVELATQYLEIIKKLQDDKIDLASDYLVMAATLLQIKASMALQGEKVDEEVELDKERLLMKLAEYKQFKEISQILRYQEEKRKEIFLKKSSPAEEFIRPIDEKILDGRSSMVQLVLTLRQMFERTFAEKLRRTKIDNFNLTPSDQVLYIKKLFNENEIVTFEMIFSLPSLSHFVITLIALLDLSRRQELLIYQDQQFGTIRIEKGPNYEE.

It belongs to the ScpA family. As to quaternary structure, component of a cohesin-like complex composed of ScpA, ScpB and the Smc homodimer, in which ScpA and ScpB bind to the head domain of Smc. The presence of the three proteins is required for the association of the complex with DNA.

Its subcellular location is the cytoplasm. Functionally, participates in chromosomal partition during cell division. May act via the formation of a condensin-like complex containing Smc and ScpB that pull DNA away from mid-cell into both cell halves. In Mycoplasmopsis pulmonis (strain UAB CTIP) (Mycoplasma pulmonis), this protein is Segregation and condensation protein A.